We begin with the raw amino-acid sequence, 678 residues long: MTPNEFFSIKYHILAKAELKAYIDKLADYLSQQSYLYHTLDKPIISDSDYDKLFRLLQDLVNDNPQFKPINSVLDRVGGEVLAEFETIKHKKKMTSLANVFSLEELRDFYDKIEYDIELECEPKMDGLAISIFYKNGKFDYAVTRGDGIQGEKVSENVKTIRNVPLKLNTSNPPEELEVRGEIILDKQSFLSLNEYMQTHENKTFANPRNAAAGSIRMLDSKVVAKRPLKLYSYGIGYFSKDFVHPETQFELMQLLQSFGFTISDNMFLAKNFSEVEEYHHKMSHQRADLAYDIDGLVFKVNNIKLQDIIGYTARGPKWAVAYKFPAEEVESEVLNVEFQVGRTGAITPVARLKPVAVGGVIVSNATLHNINEIKRKDIRVGDRVIVRRAGDVIPEVVKSLPQYRKSDAQMVEMPTNCPVCDSAIENVNDQAIYRCTGGWHCQAQTTERLKHFVSRKAMDIDKLGAKLIEQLVAANLIKYPADIYKLNFDQLTGLERMGAKSSQNVLDSIKKSKTPSLARFIFAIGIKDIGEVSSDVLANHFGSLESFRDAKFEELIEINDIGEIMANNIVSFWHDSLNIKIVEELLAIGIKIQNPVKVEHAYNESFTGKTVVITGSFENYGRTELTQLLKSIGAKVTSSVSKKTDMVICGDNAGSKLTKAQELGVEVILEDNLKDLL.

NAD(+)-binding positions include Asp-47–Asp-51, Ser-96–Leu-97, and Glu-122. Lys-124 serves as the catalytic N6-AMP-lysine intermediate. NAD(+)-binding residues include Arg-145, Glu-182, Lys-300, and Lys-324. Residues Cys-418, Cys-421, Cys-436, and Cys-442 each contribute to the Zn(2+) site. Positions Ala-602 to Leu-678 constitute a BRCT domain.

This sequence belongs to the NAD-dependent DNA ligase family. LigA subfamily. It depends on Mg(2+) as a cofactor. Requires Mn(2+) as cofactor.

It catalyses the reaction NAD(+) + (deoxyribonucleotide)n-3'-hydroxyl + 5'-phospho-(deoxyribonucleotide)m = (deoxyribonucleotide)n+m + AMP + beta-nicotinamide D-nucleotide.. Its function is as follows. DNA ligase that catalyzes the formation of phosphodiester linkages between 5'-phosphoryl and 3'-hydroxyl groups in double-stranded DNA using NAD as a coenzyme and as the energy source for the reaction. It is essential for DNA replication and repair of damaged DNA. The sequence is that of DNA ligase from Francisella tularensis subsp. novicida (strain U112).